Consider the following 114-residue polypeptide: Large ribosomal subunit protein uL22 (114 aa).

It belongs to the universal ribosomal protein uL22 family. Part of the 50S ribosomal subunit.

Functionally, this protein binds specifically to 23S rRNA; its binding is stimulated by other ribosomal proteins, e.g. L4, L17, and L20. It is important during the early stages of 50S assembly. It makes multiple contacts with different domains of the 23S rRNA in the assembled 50S subunit and ribosome. Its function is as follows. The globular domain of the protein is located near the polypeptide exit tunnel on the outside of the subunit, while an extended beta-hairpin is found that lines the wall of the exit tunnel in the center of the 70S ribosome. This chain is Large ribosomal subunit protein uL22, found in Streptococcus pyogenes serotype M5 (strain Manfredo).